A 1350-amino-acid chain; its full sequence is uncharacterized protein (1350 aa).

Disordered stretches follow at residues 348–371 (SLVG…LDDS) and 923–944 (SKME…RGTG). The span at 923-932 (SKMEGGERDA) shows a compositional bias: basic and acidic residues.

This is an uncharacterized protein from Ictalurid herpesvirus 1 (strain Auburn) (IcHV-1).